Consider the following 921-residue polypeptide: TRPM8 channel-associated factor 1 (921 aa).

In terms of domain architecture, Peptidase M60 spans 542-841 (YCWMSTGLYI…TYLQLQEAFG (300 aa)).

The protein belongs to the TCAF family. As to quaternary structure, interacts with TRPM8 (via N-terminus and C-terminus domains); the interaction inhibits TRPM8 channel activity. Interacts with TRPV6. As to expression, isoform 2 is expressed in the prostate and strongly expressed in cancerous prostate samples.

The protein localises to the cell membrane. Positively regulates the plasma membrane cation channel TRPM8 activity. Involved in the recruitment of TRPM8 to the cell surface. Promotes prostate cancer cell migration inhibition in a TRPM8-dependent manner. The polypeptide is TRPM8 channel-associated factor 1 (Homo sapiens (Human)).